Here is a 274-residue protein sequence, read N- to C-terminus: NAD kinase (274 aa).

The active-site Proton acceptor is D59. NAD(+) contacts are provided by residues 59 to 60 (DG), 133 to 134 (ND), R144, D163, 174 to 179 (TAYALS), and Q233.

The protein belongs to the NAD kinase family. Requires a divalent metal cation as cofactor.

It is found in the cytoplasm. It carries out the reaction NAD(+) + ATP = ADP + NADP(+) + H(+). Functionally, involved in the regulation of the intracellular balance of NAD and NADP, and is a key enzyme in the biosynthesis of NADP. Catalyzes specifically the phosphorylation on 2'-hydroxyl of the adenosine moiety of NAD to yield NADP. This is NAD kinase from Aquifex aeolicus (strain VF5).